Here is a 230-residue protein sequence, read N- to C-terminus: CDP-diacylglycerol--inositol 3-phosphatidyltransferase (230 aa).

Residues 1–28 (MPSAKSSDLSPTKTNLESTTKQKVSVQD) lie on the Cytoplasmic side of the membrane. A helical transmembrane segment spans residues 29 to 51 (IFLYIPNLIGYLRIITAIISFLC). Topologically, residues 52–57 (MANHPV) are lumenal. A helical membrane pass occupies residues 58–77 (ATLIFYGISGFLDAFDGYAA). The Mg(2+) site is built by D70 and D73. Residues G74, R78, and T84 each coordinate a CDP-1,2-diacyl-sn-glycerol. Residues 78 to 89 (RKFNQGTRFGAV) are Cytoplasmic-facing. A helical membrane pass occupies residues 90-110 (LDMVTDRCATSSLIVYLGVLY). Mg(2+)-binding residues include D91 and D95. The active-site Proton acceptor is D95. Residues 111 to 112 (PQ) lie on the Lumenal side of the membrane. Residues 113–133 (YTVFWQILVSLDLSSHYMHMY) traverse the membrane as a helical segment. At 134–161 (AMLSAGSTSHKNVDETQSKLLSLYYNNR) the chain is on the cytoplasmic side. Residues 162–182 (LVLFFVCLINELFYMAVYLHY) form a helical membrane-spanning segment. The Lumenal segment spans residues 183–184 (YK). The chain crosses the membrane as a helical span at residues 185-205 (FFWLGTVMLVASTPIWLFKQI). The Cytoplasmic portion of the chain corresponds to 206–230 (ANIIQLKNASLILARMDAHDHSKRD).

Belongs to the CDP-alcohol phosphatidyltransferase class-I family. It depends on Mn(2+) as a cofactor. The cofactor is Mg(2+).

It localises to the endoplasmic reticulum membrane. The catalysed reaction is a CDP-1,2-diacyl-sn-glycerol + myo-inositol = a 1,2-diacyl-sn-glycero-3-phospho-(1D-myo-inositol) + CMP + H(+). Its activity is regulated as follows. Inhibited by calcium and zinc ions. Inhibited by nucleoside triphosphates and diphosphates. In terms of biological role, catalyzes the synthesis of phosphatidylinositol (PtdIns). Required for proper membrane dynamics and cell wall integrity. In Candida albicans (strain SC5314 / ATCC MYA-2876) (Yeast), this protein is CDP-diacylglycerol--inositol 3-phosphatidyltransferase.